The sequence spans 339 residues: MRVYYDRDADLNLIKGKKVVIVGYGSQGHAHALNLKDSGVKDVAIALRKGSASAKKAEGAGFKVMEVAEAAKWADLVMMLTPDELQGDIYREHLHDNMKQGAALVFAHGLNVHFNLLDPRADLDVLMIAPKGPGHTVRSEYQRGGGVPCLIAIAKDSSGNAHDLGLSYASAIGGGRAGIIETTFKEECETDLFGEQAVLCGGLVELIKAGYETLTEAGYAPEMAYFECLHEVKLIVDLIYEGGIANMNYSISNTAEYGEYVTGPRIITPETKAEMKRVLDDIQSGRFARDWMLENKVNQSSFKATRARLSQHPIEEVGARLRDMMPWIKKGALVDKSKN.

The KARI N-terminal Rossmann domain occupies 1 to 182 (MRVYYDRDAD…GGGRAGIIET (182 aa)). NADP(+) is bound by residues 24–27 (YGSQ), Arg48, Ser51, Ser53, and 83–86 (DELQ). His108 is a catalytic residue. Residue Gly134 participates in NADP(+) binding. A KARI C-terminal knotted domain is found at 183 to 328 (TFKEECETDL…ARLRDMMPWI (146 aa)). Mg(2+) contacts are provided by Asp191, Glu195, Glu227, and Glu231. Ser252 serves as a coordination point for substrate.

It belongs to the ketol-acid reductoisomerase family. It depends on Mg(2+) as a cofactor.

The catalysed reaction is (2R)-2,3-dihydroxy-3-methylbutanoate + NADP(+) = (2S)-2-acetolactate + NADPH + H(+). The enzyme catalyses (2R,3R)-2,3-dihydroxy-3-methylpentanoate + NADP(+) = (S)-2-ethyl-2-hydroxy-3-oxobutanoate + NADPH + H(+). Its pathway is amino-acid biosynthesis; L-isoleucine biosynthesis; L-isoleucine from 2-oxobutanoate: step 2/4. It participates in amino-acid biosynthesis; L-valine biosynthesis; L-valine from pyruvate: step 2/4. Functionally, involved in the biosynthesis of branched-chain amino acids (BCAA). Catalyzes an alkyl-migration followed by a ketol-acid reduction of (S)-2-acetolactate (S2AL) to yield (R)-2,3-dihydroxy-isovalerate. In the isomerase reaction, S2AL is rearranged via a Mg-dependent methyl migration to produce 3-hydroxy-3-methyl-2-ketobutyrate (HMKB). In the reductase reaction, this 2-ketoacid undergoes a metal-dependent reduction by NADPH to yield (R)-2,3-dihydroxy-isovalerate. This Bradyrhizobium sp. (strain ORS 278) protein is Ketol-acid reductoisomerase (NADP(+)).